Reading from the N-terminus, the 207-residue chain is Protein TEX261 homolog (207 aa).

The next 4 helical transmembrane spans lie at 2–22, 54–74, 94–114, and 126–146; these read FLSLLILLSYALGFVFCVVCL, IIFLLGIFEDLDFTSLLFSFI, YKFILSVLSFIISHISWFIYF, and IIAIFTFCVWLIPLIFFISLA.

The protein belongs to the SVP26 family.

It localises to the membrane. This chain is Protein TEX261 homolog, found in Dictyostelium discoideum (Social amoeba).